We begin with the raw amino-acid sequence, 185 residues long: Ribosome-recycling factor (185 aa).

Positions 138-185 (ALKKQEKDGEITEDEERRLEKEVQKVTDESTKKIDQMADNKRKEIIQG) are disordered.

Belongs to the RRF family.

It localises to the cytoplasm. In terms of biological role, responsible for the release of ribosomes from messenger RNA at the termination of protein biosynthesis. May increase the efficiency of translation by recycling ribosomes from one round of translation to another. This chain is Ribosome-recycling factor, found in Lactobacillus delbrueckii subsp. bulgaricus (strain ATCC 11842 / DSM 20081 / BCRC 10696 / JCM 1002 / NBRC 13953 / NCIMB 11778 / NCTC 12712 / WDCM 00102 / Lb 14).